Consider the following 228-residue polypeptide: PKHD-type hydroxylase XC_1340 (228 aa).

Residues 78-180 (RIYPPLFNRY…RVASFFWIQS (103 aa)) enclose the Fe2OG dioxygenase domain. 3 residues coordinate Fe cation: His96, Asp98, and His161. Position 171 (Arg171) interacts with 2-oxoglutarate.

The cofactor is Fe(2+). L-ascorbate is required as a cofactor.

The sequence is that of PKHD-type hydroxylase XC_1340 from Xanthomonas campestris pv. campestris (strain 8004).